The primary structure comprises 567 residues: 2-isopropylmalate synthase (567 aa).

The 275-residue stretch at 28–302 (PQWCSVDLRD…NPELDFSDIN (275 aa)) folds into the Pyruvate carboxyltransferase domain. The Mg(2+) site is built by D37, H241, H243, and N277. The tract at residues 435–567 (IRTPLQLNYH…DMDTQEEDIA (133 aa)) is regulatory domain.

Belongs to the alpha-IPM synthase/homocitrate synthase family. LeuA type 2 subfamily. As to quaternary structure, homodimer. Requires Mg(2+) as cofactor.

It localises to the cytoplasm. The catalysed reaction is 3-methyl-2-oxobutanoate + acetyl-CoA + H2O = (2S)-2-isopropylmalate + CoA + H(+). The protein operates within amino-acid biosynthesis; L-leucine biosynthesis; L-leucine from 3-methyl-2-oxobutanoate: step 1/4. Functionally, catalyzes the condensation of the acetyl group of acetyl-CoA with 3-methyl-2-oxobutanoate (2-ketoisovalerate) to form 3-carboxy-3-hydroxy-4-methylpentanoate (2-isopropylmalate). The chain is 2-isopropylmalate synthase from Acetoanaerobium sticklandii (strain ATCC 12662 / DSM 519 / JCM 1433 / CCUG 9281 / NCIMB 10654 / HF) (Clostridium sticklandii).